The following is a 376-amino-acid chain: TATA box-binding protein-like 2 (376 aa).

Residues 103 to 184 (PDEVTQENKD…SDSLSLASIT (82 aa)) form a disordered region. Residues 108–122 (QENKDQPVISKHETE) show a composition bias toward basic and acidic residues. Residues 126-159 (ESQSPQSRLPSPSEQDVGLGLNSSSLSNSHSQLH) show a composition bias toward low complexity. Polar residues predominate over residues 175 to 184 (SDSLSLASIT).

Belongs to the TBP family. In terms of assembly, interacts with TAF3.

It localises to the cytoplasm. The protein localises to the nucleus. Transcription factor required in complex with TAF3 for the differentiation of myoblasts into myocytes. The complex replaces TFIID at specific promoters at an early stage in the differentiation process. The protein is TATA box-binding protein-like 2 of Pan troglodytes (Chimpanzee).